Consider the following 536-residue polypeptide: Fanconi anemia group E protein (536 aa).

Residues 150–371 (MEGASPLSER…VLTRSLFLGR (222 aa)) form an interaction with FANCC region. The segment at 171 to 252 (LGLGGRRLKS…ADGGSASPIK (82 aa)) is disordered. Basic and acidic residues predominate over residues 230 to 239 (EKERPEHKSL). The residue at position 249 (serine 249) is a Phosphoserine. Position 346 is a phosphothreonine; by CHEK1 (threonine 346). Phosphoserine; by CHEK1 is present on serine 374.

In terms of assembly, belongs to the multisubunit FA complex composed of FANCA, FANCB, FANCC, FANCE, FANCF, FANCG, FANCL/PHF9 and FANCM. The complex is not found in FA patients. Interacts with FANCC and FANCD2. Phosphorylated. Phosphorylation by CHEK1 at Thr-346 and Ser-374 regulates its function in DNA cross-links repair. In terms of processing, ubiquitinated. Phosphorylation by CHEK1 induces polyubiquitination and degradation.

It localises to the nucleus. In terms of biological role, as part of the Fanconi anemia (FA) complex functions in DNA cross-links repair. Required for the nuclear accumulation of FANCC and provides a critical bridge between the FA complex and FANCD2. The polypeptide is Fanconi anemia group E protein (FANCE) (Homo sapiens (Human)).